The following is a 127-amino-acid chain: Small ribosomal subunit protein uS13 (127 aa).

The segment covering 95 to 118 has biased composition (basic residues); the sequence is GLPVRGQRTHTNARTRKGPKKGLV. The disordered stretch occupies residues 95 to 127; the sequence is GLPVRGQRTHTNARTRKGPKKGLVRKAAAPAPK.

This sequence belongs to the universal ribosomal protein uS13 family. As to quaternary structure, part of the 30S ribosomal subunit. Forms a loose heterodimer with protein S19. Forms two bridges to the 50S subunit in the 70S ribosome.

Its function is as follows. Located at the top of the head of the 30S subunit, it contacts several helices of the 16S rRNA. In the 70S ribosome it contacts the 23S rRNA (bridge B1a) and protein L5 of the 50S subunit (bridge B1b), connecting the 2 subunits; these bridges are implicated in subunit movement. Contacts the tRNAs in the A and P-sites. In Anaeromyxobacter sp. (strain Fw109-5), this protein is Small ribosomal subunit protein uS13.